Consider the following 250-residue polypeptide: Ubiquinone/menaquinone biosynthesis C-methyltransferase UbiE (250 aa).

S-adenosyl-L-methionine-binding positions include Thr74, Asp94, 122–123, and Ser139; that span reads DA.

This sequence belongs to the class I-like SAM-binding methyltransferase superfamily. MenG/UbiE family.

The catalysed reaction is a 2-demethylmenaquinol + S-adenosyl-L-methionine = a menaquinol + S-adenosyl-L-homocysteine + H(+). The enzyme catalyses a 2-methoxy-6-(all-trans-polyprenyl)benzene-1,4-diol + S-adenosyl-L-methionine = a 5-methoxy-2-methyl-3-(all-trans-polyprenyl)benzene-1,4-diol + S-adenosyl-L-homocysteine + H(+). It functions in the pathway quinol/quinone metabolism; menaquinone biosynthesis; menaquinol from 1,4-dihydroxy-2-naphthoate: step 2/2. Its pathway is cofactor biosynthesis; ubiquinone biosynthesis. Its function is as follows. Methyltransferase required for the conversion of demethylmenaquinol (DMKH2) to menaquinol (MKH2) and the conversion of 2-polyprenyl-6-methoxy-1,4-benzoquinol (DDMQH2) to 2-polyprenyl-3-methyl-6-methoxy-1,4-benzoquinol (DMQH2). The polypeptide is Ubiquinone/menaquinone biosynthesis C-methyltransferase UbiE (Dinoroseobacter shibae (strain DSM 16493 / NCIMB 14021 / DFL 12)).